A 431-amino-acid polypeptide reads, in one-letter code: Probable pectate lyase 1 (431 aa).

An N-terminal signal peptide occupies residues Met1–Ala20. Residues Asn23, Asn28, and Asn65 are each glycosylated (N-linked (GlcNAc...) asparagine). Residues Asp227, Asp251, and Asp255 each coordinate Ca(2+). Arg307 is an active-site residue.

It belongs to the polysaccharide lyase 1 family. Ca(2+) serves as cofactor. In terms of tissue distribution, expressed in flowers, but not in leaves.

The catalysed reaction is Eliminative cleavage of (1-&gt;4)-alpha-D-galacturonan to give oligosaccharides with 4-deoxy-alpha-D-galact-4-enuronosyl groups at their non-reducing ends.. It functions in the pathway glycan metabolism; pectin degradation; 2-dehydro-3-deoxy-D-gluconate from pectin: step 2/5. The sequence is that of Probable pectate lyase 1 from Arabidopsis thaliana (Mouse-ear cress).